The following is a 936-amino-acid chain: Protein NLP2 (936 aa).

Residues 99 to 130 (IMSVNPTEAEKTGKSSGELGSDDGAHQGSSMV) are disordered. Positions 550–635 (QPSSIGHAEK…INSVHGVDRS (86 aa)) constitute an RWP-RK domain. Disordered stretches follow at residues 666–697 (PSVG…SCQL), 753–782 (CTNP…IQQE), and 794–827 (DKDH…RSAL). Residues 671–682 (TVEENSDLKSEE) are compositionally biased toward basic and acidic residues. Polar residues predominate over residues 688–697 (DGSQRQSCQL). The segment covering 754–769 (TNPSSSLRPSSESTRN) has biased composition (low complexity). A compositionally biased stretch (polar residues) spans 770-781 (QIVGRNSPSIQQ). A compositionally biased stretch (low complexity) spans 801–815 (STSGMTDSSSGSASS). Residues 816–825 (HPTFKQNTRS) show a composition bias toward polar residues. Residues 834–916 (ALTVKATYNG…RIVKLQVRDL (83 aa)) enclose the PB1 domain.

It localises to the nucleus. Its function is as follows. Probable transcription factor. This is Protein NLP2 from Oryza sativa subsp. japonica (Rice).